A 358-amino-acid polypeptide reads, in one-letter code: Carbamoyl phosphate synthase small chain (358 aa).

Positions Met1 to Val168 are CPSase. 3 residues coordinate L-glutamine: Ser45, Gly219, and Gly221. In terms of domain architecture, Glutamine amidotransferase type-1 spans Asn171–Lys357. The Nucleophile role is filled by Cys246. L-glutamine is bound by residues Met247, Gln250, Asn288, Gly290, and Tyr291. Active-site residues include His330 and Asp332.

The protein belongs to the CarA family. In terms of assembly, composed of two chains; the small (or glutamine) chain promotes the hydrolysis of glutamine to ammonia, which is used by the large (or ammonia) chain to synthesize carbamoyl phosphate. Tetramer of heterodimers (alpha,beta)4.

The catalysed reaction is hydrogencarbonate + L-glutamine + 2 ATP + H2O = carbamoyl phosphate + L-glutamate + 2 ADP + phosphate + 2 H(+). It carries out the reaction L-glutamine + H2O = L-glutamate + NH4(+). It participates in amino-acid biosynthesis; L-arginine biosynthesis; carbamoyl phosphate from bicarbonate: step 1/1. Its pathway is pyrimidine metabolism; UMP biosynthesis via de novo pathway; (S)-dihydroorotate from bicarbonate: step 1/3. Functionally, small subunit of the glutamine-dependent carbamoyl phosphate synthetase (CPSase). CPSase catalyzes the formation of carbamoyl phosphate from the ammonia moiety of glutamine, carbonate, and phosphate donated by ATP, constituting the first step of 2 biosynthetic pathways, one leading to arginine and/or urea and the other to pyrimidine nucleotides. The small subunit (glutamine amidotransferase) binds and cleaves glutamine to supply the large subunit with the substrate ammonia. This is Carbamoyl phosphate synthase small chain from Streptococcus agalactiae serotype III (strain NEM316).